We begin with the raw amino-acid sequence, 218 residues long: Adenylate kinase (218 aa).

10–15 (GAGKGT) is a binding site for ATP. Residues 30 to 59 (STGDMLRAAVKAGTPLGIEAKKVMDSGGLV) are NMP. Residues Thr31, Arg36, 57–59 (GLV), 85–88 (GFPR), and Gln92 each bind AMP. Residues 122–159 (GRRSHSASGRTYHVKYNPPKVEGLDDVTGEPLIQREDD) form an LID region. ATP-binding positions include Arg123 and 132-133 (TY). Residues Arg156 and Arg167 each coordinate AMP. Gly203 contacts ATP.

The protein belongs to the adenylate kinase family. In terms of assembly, monomer.

Its subcellular location is the cytoplasm. The enzyme catalyses AMP + ATP = 2 ADP. Its pathway is purine metabolism; AMP biosynthesis via salvage pathway; AMP from ADP: step 1/1. Catalyzes the reversible transfer of the terminal phosphate group between ATP and AMP. Plays an important role in cellular energy homeostasis and in adenine nucleotide metabolism. The protein is Adenylate kinase of Polaromonas naphthalenivorans (strain CJ2).